Here is a 328-residue protein sequence, read N- to C-terminus: D-cysteine desulfhydrase (328 aa).

N6-(pyridoxal phosphate)lysine is present on lysine 51.

The protein belongs to the ACC deaminase/D-cysteine desulfhydrase family. As to quaternary structure, homodimer. Pyridoxal 5'-phosphate is required as a cofactor.

It catalyses the reaction D-cysteine + H2O = hydrogen sulfide + pyruvate + NH4(+) + H(+). Catalyzes the alpha,beta-elimination reaction of D-cysteine and of several D-cysteine derivatives. It could be a defense mechanism against D-cysteine. The polypeptide is D-cysteine desulfhydrase (Escherichia coli O9:H4 (strain HS)).